We begin with the raw amino-acid sequence, 288 residues long: Putative transcription factor kapC (288 aa).

The span at 1–10 (MQPTLAPAPH) shows a compositional bias: pro residues. The tract at residues 1–121 (MQPTLAPAPH…AAQRAFRQRK (121 aa)) is disordered. Over residues 26–41 (HDQLLAAHQHLSHPQQ) the composition is skewed to low complexity. The segment covering 42 to 54 (ARPPPPPPQPPHM) has biased composition (pro residues). Residues 84–93 (QPDLSGQESP) show a composition bias toward polar residues. Residues 100-163 (PLSTSKRAAQ…EYIINLQSRL (64 aa)) enclose the bZIP domain. Positions 101 to 124 (LSTSKRAAQNRAAQRAFRQRKEAH) are basic motif. The span at 106–116 (RAAQNRAAQRA) shows a compositional bias: low complexity. The leucine-zipper stretch occupies residues 128 to 159 (LEGKVKAYETMGEAIKALQAENYQLREYIINL). Disordered regions lie at residues 172-226 (ELPG…NDDM) and 242-288 (PPTE…PLIS). Residues 202-212 (PVPPPTAPQQP) are compositionally biased toward pro residues. Over residues 213-222 (QPAQNQASAP) the composition is skewed to low complexity.

This sequence belongs to the bZIP family.

The protein resides in the nucleus. Putative transcription factor. The polypeptide is Putative transcription factor kapC (kapC) (Aspergillus clavatus (strain ATCC 1007 / CBS 513.65 / DSM 816 / NCTC 3887 / NRRL 1 / QM 1276 / 107)).